A 193-amino-acid chain; its full sequence is Interferon type A1/A2 (193 aa).

Positions 1–31 are cleaved as a signal peptide; sequence MAVPASPQHPRGYGILLLTLLLKALATTASA. 3 cysteine pairs are disulfide-bonded: Cys-32/Cys-129, Cys-61/Cys-155, and Cys-68/Cys-168. 4 N-linked (GlcNAc...) asparagine glycosylation sites follow: Asn-65, Asn-71, Asn-108, and Asn-186.

Belongs to the alpha/beta interferon family.

It localises to the secreted. In terms of biological role, has antiviral activities. In Gallus gallus (Chicken), this protein is Interferon type A1/A2 (IFNA1).